The primary structure comprises 153 residues: Ubiquitin-conjugating enzyme E2 13 (153 aa).

Residues serine 3–lysine 149 form the UBC core domain. Cysteine 87 acts as the Glycyl thioester intermediate in catalysis. A Glycyl lysine isopeptide (Lys-Gly) (interchain with G-Cter in ubiquitin) cross-link involves residue lysine 92.

The protein belongs to the ubiquitin-conjugating enzyme family. Heterodimer with MMS2.

The enzyme catalyses S-ubiquitinyl-[E1 ubiquitin-activating enzyme]-L-cysteine + [E2 ubiquitin-conjugating enzyme]-L-cysteine = [E1 ubiquitin-activating enzyme]-L-cysteine + S-ubiquitinyl-[E2 ubiquitin-conjugating enzyme]-L-cysteine.. It functions in the pathway protein modification; protein ubiquitination. Functionally, has a role in the DNA error-free postreplication repair (PRR) pathway. The UBC13/MMS2 heterodimer catalyzes the synthesis of non-canonical poly-ubiquitin chains that are linked through 'Lys-63'. The chain is Ubiquitin-conjugating enzyme E2 13 (UBC13) from Saccharomyces cerevisiae (strain ATCC 204508 / S288c) (Baker's yeast).